We begin with the raw amino-acid sequence, 366 residues long: tRNA/tmRNA (uracil-C(5))-methyltransferase (366 aa).

5 residues coordinate S-adenosyl-L-methionine: Q188, Y216, N221, E237, and D297. The Nucleophile role is filled by C322. The active-site Proton acceptor is the E356.

The protein belongs to the class I-like SAM-binding methyltransferase superfamily. RNA M5U methyltransferase family. TrmA subfamily.

The catalysed reaction is uridine(54) in tRNA + S-adenosyl-L-methionine = 5-methyluridine(54) in tRNA + S-adenosyl-L-homocysteine + H(+). The enzyme catalyses uridine(341) in tmRNA + S-adenosyl-L-methionine = 5-methyluridine(341) in tmRNA + S-adenosyl-L-homocysteine + H(+). Dual-specificity methyltransferase that catalyzes the formation of 5-methyluridine at position 54 (m5U54) in all tRNAs, and that of position 341 (m5U341) in tmRNA (transfer-mRNA). The sequence is that of tRNA/tmRNA (uracil-C(5))-methyltransferase from Histophilus somni (strain 129Pt) (Haemophilus somnus).